Consider the following 351-residue polypeptide: Heat-inducible transcription repressor HrcA (351 aa).

Belongs to the HrcA family.

Its function is as follows. Negative regulator of class I heat shock genes (grpE-dnaK-dnaJ and groELS operons). Prevents heat-shock induction of these operons. This Fusobacterium nucleatum subsp. nucleatum (strain ATCC 25586 / DSM 15643 / BCRC 10681 / CIP 101130 / JCM 8532 / KCTC 2640 / LMG 13131 / VPI 4355) protein is Heat-inducible transcription repressor HrcA.